Consider the following 213-residue polypeptide: Large ribosomal subunit protein uL3 (213 aa).

The segment at 131 to 155 (GRASHGNSVSHRAHGSTGNNQDPGR) is disordered. Over residues 135-152 (HGNSVSHRAHGSTGNNQD) the composition is skewed to polar residues. Glutamine 151 carries the N5-methylglutamine modification.

Belongs to the universal ribosomal protein uL3 family. In terms of assembly, part of the 50S ribosomal subunit. Forms a cluster with proteins L14 and L19. Methylated by PrmB.

Its function is as follows. One of the primary rRNA binding proteins, it binds directly near the 3'-end of the 23S rRNA, where it nucleates assembly of the 50S subunit. The sequence is that of Large ribosomal subunit protein uL3 from Agrobacterium fabrum (strain C58 / ATCC 33970) (Agrobacterium tumefaciens (strain C58)).